The primary structure comprises 157 residues: 2-C-methyl-D-erythritol 2,4-cyclodiphosphate synthase (157 aa).

2 residues coordinate a divalent metal cation: D8 and H10. 4-CDP-2-C-methyl-D-erythritol 2-phosphate contacts are provided by residues 8-10 and 34-35; these read DVH and HS. Position 42 (H42) interacts with a divalent metal cation. Residues 56-58, 61-65, 100-106, 132-135, F139, and R142 contribute to the 4-CDP-2-C-methyl-D-erythritol 2-phosphate site; these read DIG, FPDTD, AQAPKMA, and TTTE.

Belongs to the IspF family. As to quaternary structure, homotrimer. A divalent metal cation is required as a cofactor.

The catalysed reaction is 4-CDP-2-C-methyl-D-erythritol 2-phosphate = 2-C-methyl-D-erythritol 2,4-cyclic diphosphate + CMP. Its pathway is isoprenoid biosynthesis; isopentenyl diphosphate biosynthesis via DXP pathway; isopentenyl diphosphate from 1-deoxy-D-xylulose 5-phosphate: step 4/6. In terms of biological role, involved in the biosynthesis of isopentenyl diphosphate (IPP) and dimethylallyl diphosphate (DMAPP), two major building blocks of isoprenoid compounds. Catalyzes the conversion of 4-diphosphocytidyl-2-C-methyl-D-erythritol 2-phosphate (CDP-ME2P) to 2-C-methyl-D-erythritol 2,4-cyclodiphosphate (ME-CPP) with a corresponding release of cytidine 5-monophosphate (CMP). The sequence is that of 2-C-methyl-D-erythritol 2,4-cyclodiphosphate synthase from Pseudomonas putida (strain ATCC 700007 / DSM 6899 / JCM 31910 / BCRC 17059 / LMG 24140 / F1).